The sequence spans 174 residues: Protein GrpE (174 aa).

The segment at 1–35 (MAQDIKNEEVEEVQEEEVVKTAEETTPEKSELDLA) is disordered. A compositionally biased stretch (basic and acidic residues) spans 17-35 (EVVKTAEETTPEKSELDLA).

This sequence belongs to the GrpE family. In terms of assembly, homodimer.

It is found in the cytoplasm. Functionally, participates actively in the response to hyperosmotic and heat shock by preventing the aggregation of stress-denatured proteins, in association with DnaK and GrpE. It is the nucleotide exchange factor for DnaK and may function as a thermosensor. Unfolded proteins bind initially to DnaJ; upon interaction with the DnaJ-bound protein, DnaK hydrolyzes its bound ATP, resulting in the formation of a stable complex. GrpE releases ADP from DnaK; ATP binding to DnaK triggers the release of the substrate protein, thus completing the reaction cycle. Several rounds of ATP-dependent interactions between DnaJ, DnaK and GrpE are required for fully efficient folding. The chain is Protein GrpE from Streptococcus pneumoniae serotype 4 (strain ATCC BAA-334 / TIGR4).